The following is a 190-amino-acid chain: Apolipoprotein M (190 aa).

A signal peptide spans 1-17 (MFHQVWAALLYLYGLLF). Cystine bridges form between Cys-23-Cys-169, Cys-95-Cys-185, and Cys-130-Cys-159. Tetradecanoate-binding residues include Glu-138 and Arg-145.

It belongs to the calycin superfamily. Lipocalin family. Highly divergent. Interacts with LRP2; LRP2 mediates APOM renal uptake and subsequent lysosomal degradation. As to expression, expressed by the liver; secreted in plasma.

Its subcellular location is the secreted. Its function is as follows. Probably involved in lipid transport. Can bind sphingosine-1-phosphate, myristic acid, palmitic acid and stearic acid, retinol, all-trans-retinoic acid and 9-cis-retinoic acid. The sequence is that of Apolipoprotein M (Apom) from Rattus norvegicus (Rat).